Here is a 58-residue protein sequence, read N- to C-terminus: LLQVPLEKGQSAREYLQEQGLWEQYRLKYPYNPMAKFDPSFAVAGEPMTNDADLAYYG.

Residues 1 to 41 (LLQVPLEKGQSAREYLQEQGLWEQYRLKYPYNPMAKFDPSF) constitute a propeptide, activation peptide.

The protein belongs to the peptidase A1 family.

In Thunnus orientalis (North Pacific bluefin tuna), this protein is Pepsin-1.